Reading from the N-terminus, the 142-residue chain is Large ribosomal subunit protein uL13 (142 aa).

This sequence belongs to the universal ribosomal protein uL13 family. In terms of assembly, part of the 50S ribosomal subunit.

This protein is one of the early assembly proteins of the 50S ribosomal subunit, although it is not seen to bind rRNA by itself. It is important during the early stages of 50S assembly. This Vibrio campbellii (strain ATCC BAA-1116) protein is Large ribosomal subunit protein uL13.